The sequence spans 166 residues: MTESTSRRPAYARLLDRAVRILAVRDHSEQELRRKLAAPIMGKNGPEEIDATAEDYERVIAWCHEHGYLDDSRFVARFIASRSRKGYGPARIRQELNQKGISREATEKAMRECDIDWCALVRDQATRKYGEPLPTVFSEKVKIQRFLLYRGYLMEDIQDIWLNFAD.

The protein belongs to the RecX family.

It is found in the cytoplasm. Modulates RecA activity. The sequence is that of Regulatory protein RecX from Shigella sonnei (strain Ss046).